The chain runs to 263 residues: Endonuclease 8 (263 aa).

P2 (schiff-base intermediate with DNA) is an active-site residue. E3 serves as the catalytic Proton donor. The active-site Proton donor; for beta-elimination activity is K53. Q70, R125, and N169 together coordinate DNA. The segment at 229 to 263 (KVFHRDGEPCERCGGIIEKTTLSSRPFYWCPGCQH) adopts an FPG-type zinc-finger fold. The active-site Proton donor; for delta-elimination activity is R253.

It belongs to the FPG family. Requires Zn(2+) as cofactor.

The enzyme catalyses 2'-deoxyribonucleotide-(2'-deoxyribose 5'-phosphate)-2'-deoxyribonucleotide-DNA = a 3'-end 2'-deoxyribonucleotide-(2,3-dehydro-2,3-deoxyribose 5'-phosphate)-DNA + a 5'-end 5'-phospho-2'-deoxyribonucleoside-DNA + H(+). In terms of biological role, involved in base excision repair of DNA damaged by oxidation or by mutagenic agents. Acts as a DNA glycosylase that recognizes and removes damaged bases. Has a preference for oxidized pyrimidines, such as thymine glycol, 5,6-dihydrouracil and 5,6-dihydrothymine. Has AP (apurinic/apyrimidinic) lyase activity and introduces nicks in the DNA strand. Cleaves the DNA backbone by beta-delta elimination to generate a single-strand break at the site of the removed base with both 3'- and 5'-phosphates. The polypeptide is Endonuclease 8 (Escherichia coli (strain UTI89 / UPEC)).